We begin with the raw amino-acid sequence, 589 residues long: Arginine--tRNA ligase (589 aa).

The 'HIGH' region signature appears at 123–133; that stretch reads ANVAKPMHVGH.

It belongs to the class-I aminoacyl-tRNA synthetase family. Monomer.

It localises to the cytoplasm. The catalysed reaction is tRNA(Arg) + L-arginine + ATP = L-arginyl-tRNA(Arg) + AMP + diphosphate. The chain is Arginine--tRNA ligase from Hyphomonas neptunium (strain ATCC 15444).